A 223-amino-acid chain; its full sequence is Deoxyribose-phosphate aldolase (223 aa).

Asp89 serves as the catalytic Proton donor/acceptor. Lys154 acts as the Schiff-base intermediate with acetaldehyde in catalysis. Lys183 (proton donor/acceptor) is an active-site residue.

It belongs to the DeoC/FbaB aldolase family. DeoC type 1 subfamily.

The protein localises to the cytoplasm. It catalyses the reaction 2-deoxy-D-ribose 5-phosphate = D-glyceraldehyde 3-phosphate + acetaldehyde. It functions in the pathway carbohydrate degradation; 2-deoxy-D-ribose 1-phosphate degradation; D-glyceraldehyde 3-phosphate and acetaldehyde from 2-deoxy-alpha-D-ribose 1-phosphate: step 2/2. In terms of biological role, catalyzes a reversible aldol reaction between acetaldehyde and D-glyceraldehyde 3-phosphate to generate 2-deoxy-D-ribose 5-phosphate. The chain is Deoxyribose-phosphate aldolase from Thermoanaerobacter sp. (strain X514).